A 700-amino-acid polypeptide reads, in one-letter code: Small ribosomal subunit protein uS3c (700 aa).

2 insert regions span residues 88–196 (NCHM…LGKF) and 282–587 (KPCT…FQTR).

The protein belongs to the universal ribosomal protein uS3 family. Part of the 30S ribosomal subunit.

The protein localises to the plastid. Its subcellular location is the chloroplast. The chain is Small ribosomal subunit protein uS3c (rps3) from Tetradesmus obliquus (Green alga).